Reading from the N-terminus, the 72-residue chain is Translation initiation factor IF-1 (72 aa).

The S1-like domain maps to 1–72; it reads MSKEEVLEFS…TKGRITYRYK (72 aa).

The protein belongs to the IF-1 family. In terms of assembly, component of the 30S ribosomal translation pre-initiation complex which assembles on the 30S ribosome in the order IF-2 and IF-3, IF-1 and N-formylmethionyl-tRNA(fMet); mRNA recruitment can occur at any time during PIC assembly.

Its subcellular location is the cytoplasm. In terms of biological role, one of the essential components for the initiation of protein synthesis. Stabilizes the binding of IF-2 and IF-3 on the 30S subunit to which N-formylmethionyl-tRNA(fMet) subsequently binds. Helps modulate mRNA selection, yielding the 30S pre-initiation complex (PIC). Upon addition of the 50S ribosomal subunit IF-1, IF-2 and IF-3 are released leaving the mature 70S translation initiation complex. The sequence is that of Translation initiation factor IF-1 from Bartonella quintana (strain Toulouse) (Rochalimaea quintana).